Here is a 75-residue protein sequence, read N- to C-terminus: Small ribosomal subunit protein bS16 (75 aa).

This sequence belongs to the bacterial ribosomal protein bS16 family.

The polypeptide is Small ribosomal subunit protein bS16 (Campylobacter jejuni subsp. jejuni serotype O:23/36 (strain 81-176)).